A 146-amino-acid polypeptide reads, in one-letter code: Urease accessory protein UreE 1 (146 aa).

This sequence belongs to the UreE family.

Its subcellular location is the cytoplasm. Its function is as follows. Involved in urease metallocenter assembly. Binds nickel. Probably functions as a nickel donor during metallocenter assembly. In Pseudomonas syringae pv. tomato (strain ATCC BAA-871 / DC3000), this protein is Urease accessory protein UreE 1.